Consider the following 857-residue polypeptide: Envelope glycoprotein B (857 aa).

An N-terminal signal peptide occupies residues 1–21; sequence MTRRRVLSVVVLLAALACRLG. At 22–732 the chain is on the virion surface side; sequence AQTPEQPAPP…SGFISFFKNP (711 aa). 5 disulfide bridges follow: Cys-51/Cys-528, Cys-68/Cys-484, Cys-141/Cys-206, Cys-295/Cys-342, and Cys-551/Cys-588. An N-linked (GlcNAc...) asparagine; by host glycan is attached at Asn-76. The involved in fusion and/or binding to host membrane stretch occupies residues 108–114; sequence IYNGWYA. An N-linked (GlcNAc...) asparagine; by host glycan is attached at Asn-163. Positions 192–200 are involved in fusion and/or binding to host membrane; the sequence is GWLIWTYRT. N-linked (GlcNAc...) asparagine; by host glycosylation is found at Asn-290, Asn-329, Asn-348, and Asn-395. The disordered stretch occupies residues 398–453; it reads ELTTPTSSPPSSPSPPAPSAARGSTPAAVLRRRRRDAGNATTPVPPTAPGKSLGTL. Pro residues predominate over residues 404-415; the sequence is SSPPSSPSPPAP. Positions 416-425 are enriched in low complexity; sequence SAARGSTPAA. Residues Asn-436, Asn-563, and Asn-629 are each glycosylated (N-linked (GlcNAc...) asparagine; by host). The oligomerization stretch occupies residues 561–620; sequence FINDTKTYEGQLGTDNEIFLTKKMTEVCQATSQYYFQSGNEIHVYNDYHHFKTIELDGIA. 2 hydrophobic membrane proximal region regions span residues 678–730 and 709–729; these read LDNA…SFFK and NLVS…ISFF. Residues 733–753 traverse the membrane as a helical segment; that stretch reads FGGMLILVLVAGVVILVISLT. Topologically, residues 754–857 are intravirion; that stretch reads RRTRQMSQQP…ALLGEAETEF (104 aa). A disordered region spans residues 832-857; sequence FPGLRRRRYHDPETAAALLGEAETEF. The span at 845-857 shows a compositional bias: low complexity; sequence TAAALLGEAETEF.

This sequence belongs to the herpesviridae glycoprotein B family. As to quaternary structure, homotrimer; disulfide-linked. Binds to heparan sulfate proteoglycans. Interacts with gH/gL heterodimer. Post-translationally, a proteolytic cleavage by host furin generates two subunits that remain linked by disulfide bonds.

It localises to the virion membrane. Its subcellular location is the host cell membrane. It is found in the host endosome membrane. The protein resides in the host Golgi apparatus membrane. Functionally, envelope glycoprotein that forms spikes at the surface of virion envelope. Essential for the initial attachment to heparan sulfate moieties of the host cell surface proteoglycans. Involved in fusion of viral and cellular membranes leading to virus entry into the host cell. Following initial binding to its host receptors, membrane fusion is mediated by the fusion machinery composed at least of gB and the heterodimer gH/gL. May be involved in the fusion between the virion envelope and the outer nuclear membrane during virion egress. This Epstein-Barr virus (strain B95-8) (HHV-4) protein is Envelope glycoprotein B.